The chain runs to 791 residues: Probable potassium transporter 11 (791 aa).

The Cytoplasmic segment spans residues 1–49 (MASLSESEGTNRGSMWELDQNLDQPMDEEASRLKNMYREKKFSSLLLLR). A helical membrane pass occupies residues 50-70 (LAFQSLGVVFGDLGTSPLYVF). The Extracellular portion of the chain corresponds to 71-87 (YNAFPHGVDDEEDVIGA). A helical transmembrane segment spans residues 88-108 (LSLIIYTLTLIPLLKYVFVVL). Residues 109–175 (RANDNGQGGT…EAHAYKRNCL (67 aa)) are Cytoplasmic-facing. Residues 176–196 (LIVVLIGTCTAIGDGILTPAI) traverse the membrane as a helical segment. Topologically, residues 197 to 215 (SVLSASGGIKVQNPNMSTD) are extracellular. Asparagine 211 carries N-linked (GlcNAc...) asparagine glycosylation. Residues 216–236 (VVVIVSVIILIGLFSMQHYGT) form a helical membrane-spanning segment. At 237–238 (DK) the chain is on the cytoplasmic side. Residues 239–259 (VGWLFAPIVLLWFILIGSVGA) traverse the membrane as a helical segment. Residues 260-289 (LNIHKYKGSVLKAYNPVYIYRYFQRRNSDS) lie on the Extracellular side of the membrane. The chain crosses the membrane as a helical span at residues 290-310 (WASLGGIMLSITGTEALFADL). At 311-315 (CHFPV) the chain is on the cytoplasmic side. A helical membrane pass occupies residues 316–338 (FAIQIAFTLIVFPCLLLAYTGQA). The Extracellular segment spans residues 339–359 (AYIIAHKDHVADAFYRSIPDS). The helical transmembrane segment at 360–380 (IYWPAFVIATAAAIVASQATI) threads the bilayer. The Cytoplasmic segment spans residues 381-411 (SATYSIIKQALALGCFPRVKIVHTSKKFLGQ). The helical transmembrane segment at 412–432 (IYIPDINWVLLILCIAVTAGF) threads the bilayer. The Extracellular segment spans residues 433–444 (KNQSQIGNAYGT). N-linked (GlcNAc...) asparagine glycosylation is present at asparagine 434. The helical transmembrane segment at 445–465 (AVVIVMLVTTFLMVPIMLLVW) threads the bilayer. At 466 to 468 (KSH) the chain is on the cytoplasmic side. Residues 469–489 (WILVVTFIVLSLMVEIPYFSA) form a helical membrane-spanning segment. Residues 490–496 (CLLKIDQ) are Extracellular-facing. Residues 497–517 (GGWVPLVIATAFFIIMYVWHF) traverse the membrane as a helical segment. The Cytoplasmic portion of the chain corresponds to 518-791 (CTVKRYEFEM…LLNVGQIYYI (274 aa)).

Belongs to the HAK/KUP transporter (TC 2.A.72.3) family.

The protein resides in the membrane. In terms of biological role, high-affinity potassium transporter. This is Probable potassium transporter 11 from Oryza sativa subsp. japonica (Rice).